The primary structure comprises 179 residues: Interleukin-10 (179 aa).

Positions 1–19 (MPSSSALLCCLVFLAGVAA) are cleaved as a signal peptide. Cystine bridges form between cysteine 31–cysteine 127 and cysteine 81–cysteine 133. Residue asparagine 135 is glycosylated (N-linked (GlcNAc...) asparagine).

Belongs to the IL-10 family. In terms of assembly, homodimer. Interacts with IL10RA and IL10RB.

The protein resides in the secreted. Functionally, major immune regulatory cytokine that acts on many cells of the immune system where it has profound anti-inflammatory functions, limiting excessive tissue disruption caused by inflammation. Mechanistically, IL10 binds to its heterotetrameric receptor comprising IL10RA and IL10RB leading to JAK1 and STAT2-mediated phosphorylation of STAT3. In turn, STAT3 translocates to the nucleus where it drives expression of anti-inflammatory mediators. Targets antigen-presenting cells (APCs) such as macrophages and monocytes and inhibits their release of pro-inflammatory cytokines including granulocyte-macrophage colony-stimulating factor /GM-CSF, granulocyte colony-stimulating factor/G-CSF, IL-1 alpha, IL-1 beta, IL-6, IL-8 and TNF-alpha. Also interferes with antigen presentation by reducing the expression of MHC-class II and co-stimulatory molecules, thereby inhibiting their ability to induce T cell activation. In addition, controls the inflammatory response of macrophages by reprogramming essential metabolic pathways including mTOR signaling. The polypeptide is Interleukin-10 (IL10) (Cervus elaphus (Red deer)).